We begin with the raw amino-acid sequence, 202 residues long: Small ribosomal subunit protein uS4c (202 aa).

The S4 RNA-binding domain maps to 90 to 153 (MRLDNVIFRL…KSEAIISKNI (64 aa)).

This sequence belongs to the universal ribosomal protein uS4 family. In terms of assembly, part of the 30S ribosomal subunit. Contacts protein S5. The interaction surface between S4 and S5 is involved in control of translational fidelity.

The protein resides in the plastid. The protein localises to the chloroplast. Functionally, one of the primary rRNA binding proteins, it binds directly to 16S rRNA where it nucleates assembly of the body of the 30S subunit. With S5 and S12 plays an important role in translational accuracy. In Hypopterygium laricinum (Moss), this protein is Small ribosomal subunit protein uS4c (rps4).